A 2223-amino-acid chain; its full sequence is Sperm-associated antigen 17 (2223 aa).

2 stretches are compositionally biased toward basic and acidic residues: residues 144–172 (RENE…EKKA) and 200–212 (RRGE…RYID). The segment at 144 to 214 (RENEKKVIED…DHTNRYIDDE (71 aa)) is disordered. A coiled-coil region spans residues 266–295 (NQQQEVLLQSEDLEAEKLKKENAIKELKTF). Disordered regions lie at residues 387–416 (MPTS…PPPV), 680–710 (MSVQ…LNNL), 731–762 (PQHE…PKKM), 950–1015 (EERL…EPKI), 1179–1212 (GKIK…PEPV), and 1345–1378 (ETIP…PPPE). Basic and acidic residues-rich tracts occupy residues 743 to 756 (EIKD…DSHE), 950 to 999 (EERL…EQVK), and 1182 to 1205 (KGKE…KKEE). Positions 940–966 (WKEEQHRLAEEERLREEKKAEKKGKEA) form a coiled coil. Polar residues predominate over residues 1345–1354 (ETIPSEITNT). Positions 1874–1907 (RHTASSKRWKEKIDKTRKEIETTQNYLMDIKNRI) form a coiled coil. Disordered stretches follow at residues 1938-1957 (TKKN…DLNL) and 1962-2008 (HKVS…SYEP). The span at 1988-1998 (TAQNQTENLTK) shows a compositional bias: polar residues.

In terms of assembly, interacts (via the C-terminus) with SPAG6; the interaction probably occurs on polymerized microtubules. In terms of tissue distribution, highly expressed in testis. Expressed in organs that contain cilia-bearing cells including brain, oviduct, lung, and uterus.

The protein localises to the cytoplasm. It is found in the cytoskeleton. Its subcellular location is the flagellum axoneme. It localises to the cytoplasmic vesicle. The protein resides in the secretory vesicle. The protein localises to the acrosome. It is found in the golgi apparatus. Functionally, component of the central pair apparatus of ciliary axonemes. Plays a critical role in the function and structure of motile cilia. May play a role in endochondral bone formation, most likely because of a function in primary cilia of chondrocytes and osteoblasts. Essential for normal spermatogenesis and male fertility. Required for normal manchette structure, transport of proteins along the manchette microtubules and formation of the sperm head and flagellum. Essential for sperm flagellum development and proper assembly of the respiratory motile cilia central pair apparatus, but not the brain ependymal cilia. This Homo sapiens (Human) protein is Sperm-associated antigen 17 (SPAG17).